The primary structure comprises 331 residues: MCWTMPSPFTGSSTRNMESGNQSTVTEFIFTGFPQLQDGSLLYFFPLLFIYTFIIIDNLLIFSAVRLDTHLHNPMYNFISIFSFLEIWYTTATIPKMLSNLISEKKAISMTGCILQMYFFHSLENSEGILLTTMAIDRYVAICNPLRYQMIMTPRLCAQLSAGSCLFGFLILLPEIVMISTLPFCGPNQIHQIFCDLVPVLSLACTDTSMILIEDVIHAVTIIITFLIIALSYVRIVTVILRIPSSEGRQKAFSTCAGHLMVFPIFFGSVSLMYLRFSDTYPPVLDTAIALMFTVLAPFFNPIIYSLRNKDMNNAIKKLFCLQKVLNKPGG.

Over 1–41 (MCWTMPSPFTGSSTRNMESGNQSTVTEFIFTGFPQLQDGSL) the chain is Extracellular. A glycan (N-linked (GlcNAc...) asparagine) is linked at Asn-21. The chain crosses the membrane as a helical span at residues 42-62 (LYFFPLLFIYTFIIIDNLLIF). Residues 63–70 (SAVRLDTH) are Cytoplasmic-facing. Residues 71-91 (LHNPMYNFISIFSFLEIWYTT) traverse the membrane as a helical segment. Residues 92 to 115 (ATIPKMLSNLISEKKAISMTGCIL) are Extracellular-facing. The cysteines at positions 113 and 205 are disulfide-linked. Residues 116–136 (QMYFFHSLENSEGILLTTMAI) form a helical membrane-spanning segment. The Cytoplasmic segment spans residues 137-155 (DRYVAICNPLRYQMIMTPR). A helical membrane pass occupies residues 156 to 176 (LCAQLSAGSCLFGFLILLPEI). Residues 177-212 (VMISTLPFCGPNQIHQIFCDLVPVLSLACTDTSMIL) lie on the Extracellular side of the membrane. Residues 213 to 232 (IEDVIHAVTIIITFLIIALS) form a helical membrane-spanning segment. The Cytoplasmic segment spans residues 233-252 (YVRIVTVILRIPSSEGRQKA). Residues 253-273 (FSTCAGHLMVFPIFFGSVSLM) traverse the membrane as a helical segment. Residues 274-286 (YLRFSDTYPPVLD) lie on the Extracellular side of the membrane. The helical transmembrane segment at 287–307 (TAIALMFTVLAPFFNPIIYSL) threads the bilayer. Residues 308 to 331 (RNKDMNNAIKKLFCLQKVLNKPGG) are Cytoplasmic-facing.

This sequence belongs to the G-protein coupled receptor 1 family.

The protein localises to the cell membrane. In terms of biological role, odorant receptor. This Homo sapiens (Human) protein is Olfactory receptor 6K3 (OR6K3).